A 241-amino-acid polypeptide reads, in one-letter code: Endonuclease NucS (241 aa).

The protein belongs to the NucS endonuclease family.

It is found in the cytoplasm. Its function is as follows. Cleaves both 3' and 5' ssDNA extremities of branched DNA structures. This Corynebacterium jeikeium (strain K411) protein is Endonuclease NucS.